A 302-amino-acid polypeptide reads, in one-letter code: Recombination-associated protein RdgC (302 aa).

Belongs to the RdgC family.

The protein resides in the cytoplasm. The protein localises to the nucleoid. Functionally, may be involved in recombination. The polypeptide is Recombination-associated protein RdgC (Proteus mirabilis (strain HI4320)).